A 338-amino-acid chain; its full sequence is Homocysteine S-methyltransferase 3 (338 aa).

The Hcy-binding domain occupies 12–326 (AVRRWVDAAG…NTIRAIHRTL (315 aa)). The Zn(2+) site is built by Cys244, Cys311, and Cys312.

Monomer. Zn(2+) is required as a cofactor.

It catalyses the reaction S-methyl-L-methionine + L-homocysteine = 2 L-methionine + H(+). Functionally, catalyzes methyl transfer from S-methylmethionine (SMM) to adenosyl-L-homocysteine (AdoMet). SMM degradation (by HMT-1, HMT-2, HMT-3 and HMT-4) and biosynthesis (by MMT1) constitute the SMM cycle in plants, which is probably required to achieve short term control of AdoMet level. The protein is Homocysteine S-methyltransferase 3 (HMT-3) of Zea mays (Maize).